The primary structure comprises 295 residues: Bifunctional protein FolD (295 aa).

NADP(+)-binding positions include Gly166 to Ser168, Ser195, and Ile236.

It belongs to the tetrahydrofolate dehydrogenase/cyclohydrolase family. As to quaternary structure, homodimer.

The enzyme catalyses (6R)-5,10-methylene-5,6,7,8-tetrahydrofolate + NADP(+) = (6R)-5,10-methenyltetrahydrofolate + NADPH. The catalysed reaction is (6R)-5,10-methenyltetrahydrofolate + H2O = (6R)-10-formyltetrahydrofolate + H(+). It functions in the pathway one-carbon metabolism; tetrahydrofolate interconversion. In terms of biological role, catalyzes the oxidation of 5,10-methylenetetrahydrofolate to 5,10-methenyltetrahydrofolate and then the hydrolysis of 5,10-methenyltetrahydrofolate to 10-formyltetrahydrofolate. The protein is Bifunctional protein FolD of Chlorobium chlorochromatii (strain CaD3).